Reading from the N-terminus, the 646-residue chain is Epithelial sodium channel subunit beta-2 (646 aa).

Topologically, residues 1-57 are cytoplasmic; the sequence is MIQGKLKRLKRYFTRALHRIQKGPGYTYKELLVWFCDNTNTHGPKRIIKEGPKKRVM. The chain crosses the membrane as a helical span at residues 58 to 78; the sequence is WFILTLVFAGLVFWQWGLLIL. The Extracellular segment spans residues 79-551; sequence TYLSYGVSVS…GGQFGFWMGG (473 aa). 8 cysteine pairs are disulfide-bonded: C104-C290, C214-C221, C267-C274, C380-C467, C405-C463, C409-C459, C418-C445, and C420-C434. Residues 552-572 form a helical membrane-spanning segment; the sequence is SVLCIIEFGEIIIDCMWITIL. At 573–646 the chain is on the cytoplasmic side; it reads KLLAWIRNRR…IEPVSSDEEN (74 aa). A disordered region spans residues 586-646; the sequence is QRPQYADPPP…IEPVSSDEEN (61 aa). Positions 610-619 are enriched in basic and acidic residues; it reads QHDDGNHVTE.

This sequence belongs to the amiloride-sensitive sodium channel (TC 1.A.6) family. SCNN1B subfamily. Component of the heterotrimeric epithelial sodium channel (ENaC) composed of an alpha/SCNN1A, a beta/SCNN1B and a gamma/SCNN1G subunit.

It is found in the apical cell membrane. The protein resides in the cytoplasmic vesicle membrane. The enzyme catalyses Na(+)(in) = Na(+)(out). Its activity is regulated as follows. Originally identified and characterized by its inhibition by the diuretic drug amiloride. Its function is as follows. This is one of the three pore-forming subunits of the heterotrimeric epithelial sodium channel (ENaC), a critical regulator of sodium balance and fluid homeostasis. ENaC operates in epithelial tissues, where it mediates the electrodiffusion of sodium ions from extracellular fluid through the apical membrane of cells, with water following osmotically. The polypeptide is Epithelial sodium channel subunit beta-2 (scnn1b-b) (Xenopus laevis (African clawed frog)).